A 484-amino-acid polypeptide reads, in one-letter code: MSERIRVRYAPSPTGYLHIGNARTALFNYLFAKHYNGDFVVRIEDTDSKRNLEDGESSQFDNLKWLGLDWDESVDKDKGFGPYRQSERAEIYNPLIQQLLEEDKAYKCYMTEEELEAEREAQIARGEMPRYGGQHAHLTEEQRQQYEAEGRKPSIRFRVPKDQTYTFNDMVKGEISFESDNIGDWVIVKKDGVPTYNFAVAVDDHYMQISDVIRGDDHVSNTPKQLMIYEAFGWEAPRFGHMSLIVNEERKKLSKRDGQILQFIEQYRDLGYLPEALFNFITLLGWSPEGEEEIFSKEEFIKIFDEKRLSKSPAMFDRQKLAWVNNQYMKTKDTETVFELALPHLIKANLIPENPSEKDREWGRKLIALYQKEMSYAGEIVPLSEMFFHEMPELGKDEQEVLQGEQVPELMNHLYGKLESLESFEATEIKKMIKEVQKETGIKGKQLFMPIRVAVTGQMHGPELPNTIEVLGKDKVLSRLKNLV.

Positions 11–21 match the 'HIGH' region motif; it reads PSPTGYLHIGN. Residues 252–256 carry the 'KMSKS' region motif; it reads KLSKR. Lys255 contacts ATP.

It belongs to the class-I aminoacyl-tRNA synthetase family. Glutamate--tRNA ligase type 1 subfamily. As to quaternary structure, monomer.

Its subcellular location is the cytoplasm. It carries out the reaction tRNA(Glu) + L-glutamate + ATP = L-glutamyl-tRNA(Glu) + AMP + diphosphate. Its function is as follows. Catalyzes the attachment of glutamate to tRNA(Glu) in a two-step reaction: glutamate is first activated by ATP to form Glu-AMP and then transferred to the acceptor end of tRNA(Glu). The chain is Glutamate--tRNA ligase from Staphylococcus epidermidis (strain ATCC 35984 / DSM 28319 / BCRC 17069 / CCUG 31568 / BM 3577 / RP62A).